A 131-amino-acid polypeptide reads, in one-letter code: Small ribosomal subunit protein uS8 (131 aa).

It belongs to the universal ribosomal protein uS8 family. As to quaternary structure, part of the 30S ribosomal subunit. Contacts proteins S5 and S12.

Its function is as follows. One of the primary rRNA binding proteins, it binds directly to 16S rRNA central domain where it helps coordinate assembly of the platform of the 30S subunit. The protein is Small ribosomal subunit protein uS8 of Chlorobaculum tepidum (strain ATCC 49652 / DSM 12025 / NBRC 103806 / TLS) (Chlorobium tepidum).